A 441-amino-acid chain; its full sequence is Nuclear distribution protein nudF (441 aa).

Residues 9-41 enclose the LisH domain; that stretch reads QAEELHKSIIAYLASVNLTESSAALRAELGDSV. WD repeat units follow at residues 87–128, 130–170, 174–221, 224–263, 266–326, 328–367, 372–402, and 403–440; these read GHRE…RTVK, HTKA…KNIR, GHDH…CVKT, GHVD…TKST, GHEH…IKTL, GHDN…KCVR, AHGH…NGAP, and AATA…RIFA. The interval 390-415 is disordered; that stretch reads GGANGESETNGAPAATATTNGVRPDP. Low complexity predominate over residues 398-410; it reads TNGAPAATATTNG.

Belongs to the WD repeat LIS1/nudF family. In terms of assembly, self-associates. Interacts with nudE and dynein.

It localises to the cytoplasm. Its subcellular location is the cytoskeleton. It is found in the spindle pole. Positively regulates the activity of the minus-end directed microtubule motor protein dynein. May enhance dynein-mediated microtubule sliding by targeting dynein to the microtubule plus end. Required for nuclear migration during vegetative growth as well as development. Required for retrograde early endosome (EE) transport from the hyphal tip. Required for localization of dynein to the mitotic spindle poles. Recruits additional proteins to the dynein complex at SPBs. This is Nuclear distribution protein nudF from Neosartorya fischeri (strain ATCC 1020 / DSM 3700 / CBS 544.65 / FGSC A1164 / JCM 1740 / NRRL 181 / WB 181) (Aspergillus fischerianus).